The primary structure comprises 156 residues: Transcription antitermination protein NusB (156 aa).

Belongs to the NusB family.

Involved in transcription antitermination. Required for transcription of ribosomal RNA (rRNA) genes. Binds specifically to the boxA antiterminator sequence of the ribosomal RNA (rrn) operons. This Vibrio cholerae serotype O1 (strain ATCC 39541 / Classical Ogawa 395 / O395) protein is Transcription antitermination protein NusB.